The sequence spans 369 residues: Outer membrane porin F (369 aa).

The N-terminal stretch at 1 to 21 (MKRNILAVVIPALLVAGTANA) is a signal peptide. The chain crosses the membrane as a beta stranded span at residues 22–27 (AEIFNK). A topological domain (periplasmic) is located at residue Asp-28. Residues 29–44 (GNKLDLYGKVDVRHQF) form a beta stranded membrane-spanning segment. At 45-55 (ADKRSSEDGDD) the chain is on the extracellular side. The beta stranded transmembrane segment at 56 to 68 (SYARIGIKGETQI) threads the bilayer. Over 69-70 (SD) the chain is Periplasmic. Residues 71–83 (QLTGFGRWEYNVK) form a beta stranded membrane-spanning segment. Topologically, residues 84–97 (AKGTEAAVAESSTR) are extracellular. Residues 98–106 (LAFAGLKFA) form a beta stranded membrane-spanning segment. Residues 107–108 (NY) lie on the Periplasmic side of the membrane. A beta stranded transmembrane segment spans residues 109–115 (GSLDYGR). Over 116-150 (NYGVNYDVNAWTDVLPIFGGDAMAQTDNFMTGRST) the chain is Extracellular. Residues 151–157 (GLLTYRN) form a beta stranded membrane-spanning segment. The Periplasmic segment spans residues 158–165 (TDFFGLVD). A beta stranded transmembrane segment spans residues 166–177 (GLNFALQYQGQN). Residues 178–193 (SDRTKNKGRDTERSNG) are Extracellular-facing. Residues 194-204 (DGYGLSSTYDV) form a beta stranded membrane-spanning segment. Residues 205-206 (GY) are Periplasmic-facing. Residues 207-219 (GITVGGSYANSAR) traverse the membrane as a beta stranded segment. At 220–234 (TADQKEKVSDAYGKR) the chain is on the extracellular side. The chain crosses the membrane as a beta stranded span at residues 235–246 (AEAWNIGAKYDA). A topological domain (periplasmic) is located at residue Asn-247. Residues 248 to 259 (NVYLAAMYGETR) traverse the membrane as a beta stranded segment. At 260–278 (NMTRYTRTIADTDATLIAN) the chain is on the extracellular side. The beta stranded transmembrane segment at 279 to 291 (KTQNIELTAQYLF) threads the bilayer. The Periplasmic portion of the chain corresponds to 292-294 (SDL). Residues 295–308 (GLKPSLAYVQSKGK) traverse the membrane as a beta stranded segment. Residues 309–320 (DLTEGKGFNGDL) lie on the Extracellular side of the membrane. Residues 321-332 (VKYVSVGTYYYF) form a beta stranded membrane-spanning segment. The Periplasmic segment spans residues 333 to 334 (NK). The chain crosses the membrane as a beta stranded span at residues 335–344 (NLSTYVDYKI). Residues 345 to 359 (NLLKKDNELGVNARN) are Extracellular-facing. Residues 360-369 (VFGVGLTYQF) traverse the membrane as a beta stranded segment.

This sequence belongs to the Gram-negative porin family. Homotrimer.

Its subcellular location is the cell outer membrane. Functionally, forms pores that allow passive diffusion of small molecules across the outer membrane. The chain is Outer membrane porin F (ompF) from Xenorhabdus nematophila (strain ATCC 19061 / DSM 3370 / CCUG 14189 / LMG 1036 / NCIMB 9965 / AN6).